Reading from the N-terminus, the 462-residue chain is 3-isopropylmalate dehydratase large subunit (462 aa).

Residues C337, C397, and C400 each contribute to the [4Fe-4S] cluster site.

It belongs to the aconitase/IPM isomerase family. LeuC type 1 subfamily. As to quaternary structure, heterodimer of LeuC and LeuD. It depends on [4Fe-4S] cluster as a cofactor.

The catalysed reaction is (2R,3S)-3-isopropylmalate = (2S)-2-isopropylmalate. Its pathway is amino-acid biosynthesis; L-leucine biosynthesis; L-leucine from 3-methyl-2-oxobutanoate: step 2/4. In terms of biological role, catalyzes the isomerization between 2-isopropylmalate and 3-isopropylmalate, via the formation of 2-isopropylmaleate. In Listeria monocytogenes serotype 4a (strain HCC23), this protein is 3-isopropylmalate dehydratase large subunit.